We begin with the raw amino-acid sequence, 228 residues long: MTEYLLSAGICMAIVSILLIGMAISNVSKGQYAKRFFYFATSCLVLTLVVVSSLSSSANASQTDNGVNRSGSEDPTVYSATSTKKLHKEPATLIKAIDGDTVKLMYKGQPMTFRLLLVDTPETKHPKKGVEKYGPEASAFTKKMVENAKKIEVEFDKGQRTDKYGRGLAYIYADGKMVNEALVRQGLAKVAYVYKPNNTHEQLLRKSEAQAKKEKLNIWSEDNADSGQ.

An N-terminal signal peptide occupies residues 1 to 23 (MTEYLLSAGICMAIVSILLIGMA). Positions 24-60 (ISNVSKGQYAKRFFYFATSCLVLTLVVVSSLSSSANA) are excised as a propeptide. Over residues 58-70 (ANASQTDNGVNRS) the composition is skewed to polar residues. A disordered region spans residues 58–83 (ANASQTDNGVNRSGSEDPTVYSATST). D100 contributes to the Ca(2+) binding site. R114 is a catalytic residue. 2 residues coordinate Ca(2+): D119 and T120. Catalysis depends on residues E122 and R166.

This sequence belongs to the thermonuclease family. The cofactor is Ca(2+).

It localises to the secreted. The enzyme catalyses Endonucleolytic cleavage to nucleoside 3'-phosphates and 3'-phosphooligonucleotide end-products.. Enzyme that catalyzes the hydrolysis of both DNA and RNA at the 5' position of the phosphodiester bond. This Staphylococcus aureus (strain COL) protein is Thermonuclease (nuc).